We begin with the raw amino-acid sequence, 396 residues long: uncharacterized protein (396 aa).

This is an uncharacterized protein from Psittacid herpesvirus 1 (isolate Amazon parrot/-/97-0001/1997) (PsHV-1).